A 140-amino-acid chain; its full sequence is Endoribonuclease YbeY (140 aa).

The Zn(2+) site is built by His105, His109, and Asp115.

Belongs to the endoribonuclease YbeY family. Requires Zn(2+) as cofactor.

Its subcellular location is the cytoplasm. Its function is as follows. Single strand-specific metallo-endoribonuclease involved in late-stage 70S ribosome quality control and in maturation of the 3' terminus of the 16S rRNA. The chain is Endoribonuclease YbeY from Flavobacterium psychrophilum (strain ATCC 49511 / DSM 21280 / CIP 103535 / JIP02/86).